A 345-amino-acid chain; its full sequence is uncharacterized protein (345 aa).

Over residues 1–13 (MSKPNTETISVNI) the composition is skewed to polar residues. The disordered stretch occupies residues 1-23 (MSKPNTETISVNIPESEGVPLPD). Residues 283-316 (SLKQRTNILKKQGETLKKNVEDINKDTSNLKRHA) adopt a coiled-coil conformation.

It localises to the virion. This is an uncharacterized protein from Acanthamoeba polyphaga mimivirus (APMV).